The primary structure comprises 133 residues: uncharacterized protein (133 aa).

Residues 3-106 (IFTKIINREL…PTRSLSDFGF (104 aa)) form the HIT domain. Residues 90 to 94 (HLHIH) carry the Histidine triad motif motif.

This is an uncharacterized protein from Mycobacterium tuberculosis (strain ATCC 25618 / H37Rv).